The following is a 202-amino-acid chain: Eukaryotic translation initiation factor isoform 4E (202 aa).

The segment at 1 to 24 (MATEAPPPVDTTEVPPFTAAETAV) is disordered. MRNA contacts are provided by residues 46-51 (QGAAWG), Lys-78, and 96-97 (WE). An intrachain disulfide couples Cys-101 to Cys-140. MRNA is bound by residues 147–152 (RRSQDK) and 191–194 (KRER).

The protein belongs to the eukaryotic initiation factor 4E family. EIF4F is a multi-subunit complex, the composition of which varies with external and internal environmental conditions. It is composed of at least EIF4A, EIF4E and EIF4G. EIF4E is also known to interact with other partners. In higher plants two isoforms of EIF4F have been identified, named isoform EIF4F and isoform EIF(iso)4F. Isoform EIF4F has subunits p220 and p26, whereas isoform EIF(iso)4F has subunits p82 and p28. In terms of assembly, (Microbial infection) Interacts with viral genome-linked protein (VPg); this interaction is possible in susceptible hosts but impaired in resistant plants. According to the redox status, the Cys-101-Cys-140 disulfide bridge may have a role in regulating protein function by affecting its ability to bind capped mRNA.

It is found in the cytoplasm. It localises to the nucleus. Its function is as follows. Component of the protein complex eIF4F, which is involved in the recognition of the mRNA cap, ATP-dependent unwinding of 5'-terminal secondary structure and recruitment of mRNA to the ribosome. Recognizes and binds the 7-methylguanosine-containing mRNA cap during an early step in the initiation of protein synthesis and facilitates ribosome binding by inducing the unwinding of the mRNAs secondary structures. Key component of recessive resistance to potyviruses. (Microbial infection) Susceptibility host factor required for viral infection by recruiting viral RNAs to the host ribosomal complex via an interaction with viral genome-linked protein (VPg). In Capsicum annuum (Capsicum pepper), this protein is Eukaryotic translation initiation factor isoform 4E.